A 154-amino-acid polypeptide reads, in one-letter code: UPF0178 protein in pahZ1 5'region (154 aa).

The protein belongs to the UPF0178 family.

The chain is UPF0178 protein in pahZ1 5'region from Paucimonas lemoignei (Pseudomonas lemoignei).